We begin with the raw amino-acid sequence, 110 residues long: Protein RnfH (110 aa).

Residues 90–110 (VDKTRREGSIEGRKWLPKDSR) are disordered.

The protein belongs to the UPF0125 (RnfH) family.

The polypeptide is Protein RnfH (Burkholderia mallei (strain NCTC 10229)).